Here is a 1342-residue protein sequence, read N- to C-terminus: DNA-directed RNA polymerase subunit beta (1342 aa).

It belongs to the RNA polymerase beta chain family. As to quaternary structure, the RNAP catalytic core consists of 2 alpha, 1 beta, 1 beta' and 1 omega subunit. When a sigma factor is associated with the core the holoenzyme is formed, which can initiate transcription.

The catalysed reaction is RNA(n) + a ribonucleoside 5'-triphosphate = RNA(n+1) + diphosphate. Its function is as follows. DNA-dependent RNA polymerase catalyzes the transcription of DNA into RNA using the four ribonucleoside triphosphates as substrates. This chain is DNA-directed RNA polymerase subunit beta, found in Mannheimia succiniciproducens (strain KCTC 0769BP / MBEL55E).